The following is a 290-amino-acid chain: Inositol-1-monophosphatase (290 aa).

Glu-83, Asp-104, Ile-106, and Asp-107 together coordinate Mg(2+). Residue Glu-83 coordinates substrate. Substrate-binding positions include 106–109, Arg-206, and Asp-235; that span reads IDGT. Residue Asp-235 participates in Mg(2+) binding.

Belongs to the inositol monophosphatase superfamily. Mg(2+) serves as cofactor.

The enzyme catalyses a myo-inositol phosphate + H2O = myo-inositol + phosphate. The chain is Inositol-1-monophosphatase (suhB) from Mycobacterium bovis (strain ATCC BAA-935 / AF2122/97).